A 157-amino-acid polypeptide reads, in one-letter code: Protein NrdI (157 aa).

Belongs to the NrdI family.

In terms of biological role, probably involved in ribonucleotide reductase function. The sequence is that of Protein NrdI from Mycoplasma mycoides subsp. mycoides SC (strain CCUG 32753 / NCTC 10114 / PG1).